We begin with the raw amino-acid sequence, 364 residues long: MSEENINKNEFPELKNDTFLKACRGEEVPYVPVWIMRQAGRYLPEFKSVRADVDFFSVCRTPELACKVTLQPLDRFPLDAAIIFSDILVVPQAMGIEVQMIPGKGPFFPNPIRTIEDLSRVQFPVDVNKELGYVFDALTLTRKRLEGRVPLIGFTGAPWTLMTYCIEGSGGTTMSNSKSWLYKHPAESHKFLSMLTRVCIDYLLGQIKAGAQALQIFDSWSNELSPAMFKEYCLPYLVQIGKEVKAVHPEIPLICFAKGSNFALEDLSKSGAYDVLGIDWTIEPSVAREMVADRVSLQGNLDPCVLYCGDQVIRDQTQKMLQSFGTTKRLIANLGHGMHPTHPIEGPESYVKAVHELSKQMINK.

Residues 37–41 (RQAGR), Phe-55, Ser-85, Asp-86, Tyr-164, Ser-219, and His-336 contribute to the substrate site.

This sequence belongs to the uroporphyrinogen decarboxylase family. As to quaternary structure, homodimer.

The protein localises to the cytoplasm. The enzyme catalyses uroporphyrinogen III + 4 H(+) = coproporphyrinogen III + 4 CO2. It participates in porphyrin-containing compound metabolism; protoporphyrin-IX biosynthesis; coproporphyrinogen-III from 5-aminolevulinate: step 4/4. Functionally, catalyzes the decarboxylation of four acetate groups of uroporphyrinogen-III to yield coproporphyrinogen-III. The protein is Uroporphyrinogen decarboxylase (hemE) of Dictyostelium discoideum (Social amoeba).